The primary structure comprises 677 residues: Methionine--tRNA ligase (677 aa).

The 'HIGH' region motif lies at 15–25; sequence PYANGSIHLGH. Zn(2+) is bound by residues C146, C149, C159, and C162. The short motif at 333-337 is the 'KMSKS' region element; the sequence is KMSKS. Position 336 (K336) interacts with ATP. Residues 575 to 677 form the tRNA-binding domain; that stretch reads DFAKIDLRVA…DGAKPGQQVK (103 aa).

The protein belongs to the class-I aminoacyl-tRNA synthetase family. MetG type 1 subfamily. In terms of assembly, homodimer. The cofactor is Zn(2+).

It is found in the cytoplasm. The catalysed reaction is tRNA(Met) + L-methionine + ATP = L-methionyl-tRNA(Met) + AMP + diphosphate. In terms of biological role, is required not only for elongation of protein synthesis but also for the initiation of all mRNA translation through initiator tRNA(fMet) aminoacylation. This Salmonella typhi protein is Methionine--tRNA ligase.